The sequence spans 145 residues: Polytheonamide B (145 aa).

The propeptide occupies 1–96 (MADSDNTPTS…DDDLDQAAGG (96 aa)). 2-oxo-5,5-dimethylhexanoate is present on threonine 97. Isoleucine 99 bears the 3-methylisoleucine mark. 3-methylvaline is present on valine 101. A 3-methyl-D-valine modification is found at valine 102. At valine 103 the chain carries 3-methylvaline. A D-alanine (Ala) modification is found at alanine 104. Residue valine 105 is modified to 3-methylvaline. 2 positions are modified to 3-methyl-D-valine: valine 106 and valine 110. At asparagine 112 the chain carries N4-methyl-D-asparagine. Threonine 113 carries the 3-hydroxyvaline (Thr) modification. Residue valine 117 is modified to 3-methylvaline. Asparagine 118 carries the N4-methyl-D-asparagine modification. Glutamine 119 bears the (3S)-3-methylglutamine mark. Valine 120 carries the 3-hydroxy-D-valine modification. Asparagine 124 is subject to N4-methyl-D-asparagine. The residue at position 126 (asparagine 126) is a (3R)-N4-methyl-3-hydroxy-D-asparagine. A 3-methylvaline modification is found at valine 127. Residue valine 128 is modified to 3-hydroxy-D-valine. An N4-methyl-D-asparagine mark is found at asparagine 130 and asparagine 132. A (3R)-N4-methyl-3-hydroxy-D-asparagine modification is found at asparagine 134. The residue at position 136 (asparagine 136) is an N4-methyl-D-asparagine. Serine 138 carries the post-translational modification D-serine (Ser). Position 140 is a D-asparagine (asparagine 140). Methionine 141 carries the post-translational modification 3,3-dimethylmethionine. Residue asparagine 142 is modified to D-asparagine. Residue threonine 144 is modified to D-threonine.

Post-translationally, epimerization of most, and perhaps all, L- to D-amino acids is catalyzed by PoyD, when PoyA and PoyD are coexpressed in E.coli. In terms of processing, N-methylations are catalyzed by PoyE, when PoyA and PoyE are coexpressed in E.coli. To obtain 2-oxo-5,5-dimethylhexanoate, Thr-97 is firstly dehydrated by PoyF. The second step possibly corresponds to methylation by PoyB/C, and the third step may be a cleavage by PoyH/J.

Antimicrobial peptide active against Gram-positive bacteria (MIC=4-&gt;125 ug/ml). May act by forming transmembrane ion channels, since the peptide rapidly depolarizes the bacterial cytoplasmic membrane, simultaneously decreasing the membrane potential and intracellular potassium contents. This Bacterium symbiont subsp. Theonella swinhoei (strain pTSMAC1) protein is Polytheonamide B.